We begin with the raw amino-acid sequence, 106 residues long: Flagellar transcriptional regulator FlhD (106 aa).

The protein belongs to the FlhD family. Homodimer; disulfide-linked. Forms a heterohexamer composed of two FlhC and four FlhD subunits. Each FlhC binds a FlhD dimer, forming a heterotrimer, and a hexamer assembles by dimerization of two heterotrimers.

The protein localises to the cytoplasm. Functions in complex with FlhC as a master transcriptional regulator that regulates transcription of several flagellar and non-flagellar operons by binding to their promoter region. Activates expression of class 2 flagellar genes, including fliA, which is a flagellum-specific sigma factor that turns on the class 3 genes. Also regulates genes whose products function in a variety of physiological pathways. The chain is Flagellar transcriptional regulator FlhD from Burkholderia mallei (strain SAVP1).